Consider the following 457-residue polypeptide: MEEQARPPSRPAASATLPGSAHPGGAASTATAAALSFSSVATVTLGNQSDAGRPEAAGSRGPAPLLWHGAAVAAQALVLLLIFLLSSLGNCAVMGVIVKHRQLRTVTNAFILSLSLSDLLTALLCLPAAFLDLFAPPGDSGPWRSFCAASRFFSSCFGIVSTFSVALISLDRYCAIVRPPRDKLGRRRALQLLAGAWLAALGFSLPWELLRAPREPPTPQSFHRCLYRTSPDPAQLGAAYSVGLVVACYLLPFLLMCFCRYHICKTVRLSDVRVRPMTTYARVLRFFSEVRTATTVLIMIVFVICCWGPYCFLVLLAATRQGQTTQAPSLLNVAAVWLTWANGAINPVIYAIRNPNISMFLGRNREEGYRTRNMDVFLPSQGLGFQARSRNRLRNGCANRLGACSRMPSSNPASGSGGEVVMWARKNPVVLFFREDPPDPVMAVYKQHKSETRDSSI.

The segment at 1 to 27 (MEEQARPPSRPAASATLPGSAHPGGAA) is disordered. Topologically, residues 1 to 64 (MEEQARPPSR…EAAGSRGPAP (64 aa)) are extracellular. N-linked (GlcNAc...) asparagine glycosylation occurs at Asn47. The helical transmembrane segment at 65 to 85 (LLWHGAAVAAQALVLLLIFLL) threads the bilayer. Residues 86–109 (SSLGNCAVMGVIVKHRQLRTVTNA) are Cytoplasmic-facing. Residues 110 to 130 (FILSLSLSDLLTALLCLPAAF) form a helical membrane-spanning segment. Residues 131-156 (LDLFAPPGDSGPWRSFCAASRFFSSC) are Extracellular-facing. The chain crosses the membrane as a helical span at residues 157–177 (FGIVSTFSVALISLDRYCAIV). Over 178-189 (RPPRDKLGRRRA) the chain is Cytoplasmic. The chain crosses the membrane as a helical span at residues 190–210 (LQLLAGAWLAALGFSLPWELL). At 211 to 235 (RAPREPPTPQSFHRCLYRTSPDPAQ) the chain is on the extracellular side. A helical membrane pass occupies residues 236–256 (LGAAYSVGLVVACYLLPFLLM). Topologically, residues 257–295 (CFCRYHICKTVRLSDVRVRPMTTYARVLRFFSEVRTATT) are cytoplasmic. A helical transmembrane segment spans residues 296-316 (VLIMIVFVICCWGPYCFLVLL). Residues 317-329 (AATRQGQTTQAPS) are Extracellular-facing. A helical transmembrane segment spans residues 330-350 (LLNVAAVWLTWANGAINPVIY). Over 351–457 (AIRNPNISMF…HKSETRDSSI (107 aa)) the chain is Cytoplasmic.

Belongs to the G-protein coupled receptor 1 family. Interacts with MTNR1B. Interacts with ARRB1 and ARRB2 in a spontaneous and agonist-independent manner; leading to the internalization of GPR135 in the endosomal compartment.

The protein localises to the cell membrane. The protein resides in the endosome membrane. In terms of biological role, orphan receptor. Has spontaneous activity for beta-arrestin recruitment. Shows a reciprocal regulatory interaction with the melatonin receptor MTNR1B most likely through receptor heteromerization. In Rattus norvegicus (Rat), this protein is G-protein coupled receptor 135 (Gpr135).